A 546-amino-acid chain; its full sequence is NAD(P)H-quinone oxidoreductase chain 4 (546 aa).

14 consecutive transmembrane segments (helical) span residues 24 to 44 (FPWL…IPFF), 56 to 76 (FALS…INGF), 108 to 128 (MPLI…AWPV), 132 to 152 (PKLF…VFAV), 156 to 176 (LLFF…LAIW), 188 to 208 (FIIY…AMGF), 232 to 252 (ILCY…VPLH), 263 to 283 (TAPV…YALL), 297 to 317 (FSPL…LTSF), 326 to 346 (IAYS…SFSS), 352 to 372 (AMLQ…LVGA), 396 to 416 (FALW…SGFV), 437 to 457 (VIMA…LLSM), and 484 to 504 (IYII…PRLV).

The protein belongs to the complex I subunit 4 family.

It is found in the cellular thylakoid membrane. It carries out the reaction a plastoquinone + NADH + (n+1) H(+)(in) = a plastoquinol + NAD(+) + n H(+)(out). The enzyme catalyses a plastoquinone + NADPH + (n+1) H(+)(in) = a plastoquinol + NADP(+) + n H(+)(out). NDH-1 shuttles electrons from NAD(P)H, via FMN and iron-sulfur (Fe-S) centers, to quinones in the respiratory chain. The immediate electron acceptor for the enzyme in this species is believed to be plastoquinone. Couples the redox reaction to proton translocation (for every two electrons transferred, four hydrogen ions are translocated across the cytoplasmic membrane), and thus conserves the redox energy in a proton gradient. The sequence is that of NAD(P)H-quinone oxidoreductase chain 4 from Prochlorococcus marinus subsp. pastoris (strain CCMP1986 / NIES-2087 / MED4).